The following is a 683-amino-acid chain: Elongation factor G 2 (683 aa).

Residues 4 to 279 enclose the tr-type G domain; that stretch reads QQMRNIGIMA…AVVEYLPAPQ (276 aa). Residues 13–20, 77–81, and 131–134 each bind GTP; these read AHVDAGKT, DTPGH, and NKMD.

The protein belongs to the TRAFAC class translation factor GTPase superfamily. Classic translation factor GTPase family. EF-G/EF-2 subfamily.

Its subcellular location is the cytoplasm. Functionally, catalyzes the GTP-dependent ribosomal translocation step during translation elongation. During this step, the ribosome changes from the pre-translocational (PRE) to the post-translocational (POST) state as the newly formed A-site-bound peptidyl-tRNA and P-site-bound deacylated tRNA move to the P and E sites, respectively. Catalyzes the coordinated movement of the two tRNA molecules, the mRNA and conformational changes in the ribosome. The chain is Elongation factor G 2 (fusB) from Treponema pallidum (strain Nichols).